The chain runs to 233 residues: Nickel import system ATP-binding protein NikE (233 aa).

The region spanning 2 to 228 (IELKHVTFGY…DRHPYTKELV (227 aa)) is the ABC transporter domain. 35–42 (GESGCGKS) is a binding site for ATP.

It belongs to the ABC transporter superfamily. In terms of assembly, the complex is composed of two ATP-binding proteins (NikD and NikE), two transmembrane proteins (NikB and NikC) and a solute-binding protein (NikA).

The protein localises to the cell membrane. It catalyses the reaction Ni(2+)(out) + ATP + H2O = Ni(2+)(in) + ADP + phosphate + H(+). Part of the ABC transporter complex NikABCDE (Opp2) involved in nickel import. Probably responsible for energy coupling to the transport system. The sequence is that of Nickel import system ATP-binding protein NikE from Staphylococcus aureus (strain Mu50 / ATCC 700699).